Consider the following 361-residue polypeptide: tRNA-specific 2-thiouridylase MnmA (361 aa).

ATP contacts are provided by residues 8–15 (AMSGGVDS) and M35. The tract at residues 95–97 (NPD) is interaction with target base in tRNA. Residue C100 is the Nucleophile of the active site. A disulfide bridge links C100 with C196. Residue G124 coordinates ATP. Positions 146–148 (KDQ) are interaction with tRNA. The active-site Cysteine persulfide intermediate is the C196. Residues 303 to 304 (RY) are interaction with tRNA.

The protein belongs to the MnmA/TRMU family.

The protein resides in the cytoplasm. It carries out the reaction S-sulfanyl-L-cysteinyl-[protein] + uridine(34) in tRNA + AH2 + ATP = 2-thiouridine(34) in tRNA + L-cysteinyl-[protein] + A + AMP + diphosphate + H(+). Catalyzes the 2-thiolation of uridine at the wobble position (U34) of tRNA, leading to the formation of s(2)U34. This is tRNA-specific 2-thiouridylase MnmA from Chlamydia pneumoniae (Chlamydophila pneumoniae).